Consider the following 224-residue polypeptide: Urease accessory protein UreF (224 aa).

This sequence belongs to the UreF family. In terms of assembly, ureD, UreF and UreG form a complex that acts as a GTP-hydrolysis-dependent molecular chaperone, activating the urease apoprotein by helping to assemble the nickel containing metallocenter of UreC. The UreE protein probably delivers the nickel.

The protein localises to the cytoplasm. Required for maturation of urease via the functional incorporation of the urease nickel metallocenter. The sequence is that of Urease accessory protein UreF from Klebsiella pneumoniae (strain 342).